Reading from the N-terminus, the 673-residue chain is Glycine--tRNA ligase beta subunit (673 aa).

Belongs to the class-II aminoacyl-tRNA synthetase family. Tetramer of two alpha and two beta subunits.

It localises to the cytoplasm. The catalysed reaction is tRNA(Gly) + glycine + ATP = glycyl-tRNA(Gly) + AMP + diphosphate. The polypeptide is Glycine--tRNA ligase beta subunit (Lactococcus lactis subsp. lactis (strain IL1403) (Streptococcus lactis)).